Reading from the N-terminus, the 601-residue chain is N-acetyltransferase ESCO2 (601 aa).

Ser-29, Ser-75, Ser-223, and Ser-244 each carry phosphoserine. Residues 222-243 (SSLENEPSLGRTQKSKSEVIED) are disordered. Residues 282-305 (KEKLIKDSSDDRVSSKEHKVDKNE) are compositionally biased toward basic and acidic residues. Residues 282 to 315 (KEKLIKDSSDDRVSSKEHKVDKNEAFSSEDSLGE) form a disordered region. Polar residues predominate over residues 306–315 (AFSSEDSLGE). Position 312 is a phosphoserine (Ser-312). The segment at 387–411 (TVCKSCGMIYTASNPEDEMQHVQHH) adopts a CCHH-type zinc-finger fold. At Ser-512 the chain carries Phosphoserine.

Belongs to the acetyltransferase family. ECO subfamily. In terms of tissue distribution, widely expressed in fetal tissues. In adult, it is expressed in thymus, placenta and small intestine.

It localises to the nucleus. Its subcellular location is the chromosome. It carries out the reaction L-lysyl-[protein] + acetyl-CoA = N(6)-acetyl-L-lysyl-[protein] + CoA + H(+). In terms of biological role, acetyltransferase required for the establishment of sister chromatid cohesion. Couples the processes of cohesion and DNA replication to ensure that only sister chromatids become paired together. In contrast to the structural cohesins, the deposition and establishment factors are required only during the S phase. Acetylates the cohesin component SMC3. The protein is N-acetyltransferase ESCO2 of Homo sapiens (Human).